A 427-amino-acid chain; its full sequence is 3-phosphoshikimate 1-carboxyvinyltransferase (427 aa).

3-phosphoshikimate is bound by residues K20, S21, and R25. Phosphoenolpyruvate is bound at residue K20. Positions 92 and 120 each coordinate phosphoenolpyruvate. The 3-phosphoshikimate site is built by S166, Q168, D312, and K339. Q168 serves as a coordination point for phosphoenolpyruvate. D312 (proton acceptor) is an active-site residue. Residues R343 and R385 each contribute to the phosphoenolpyruvate site.

This sequence belongs to the EPSP synthase family. In terms of assembly, monomer.

The protein resides in the cytoplasm. The enzyme catalyses 3-phosphoshikimate + phosphoenolpyruvate = 5-O-(1-carboxyvinyl)-3-phosphoshikimate + phosphate. It functions in the pathway metabolic intermediate biosynthesis; chorismate biosynthesis; chorismate from D-erythrose 4-phosphate and phosphoenolpyruvate: step 6/7. In terms of biological role, catalyzes the transfer of the enolpyruvyl moiety of phosphoenolpyruvate (PEP) to the 5-hydroxyl of shikimate-3-phosphate (S3P) to produce enolpyruvyl shikimate-3-phosphate and inorganic phosphate. This is 3-phosphoshikimate 1-carboxyvinyltransferase from Streptococcus thermophilus (strain ATCC BAA-250 / LMG 18311).